The primary structure comprises 773 residues: ATP-dependent zinc metalloprotease YME1L1 (773 aa).

Over 1–295 the chain is Mitochondrial matrix; sequence MFSLSSTVQP…TNDSLRRTRL (295 aa). Residues 296-316 form a helical membrane-spanning segment; the sequence is ILFVLLLFGIYGLLKNPFLSV. Residues 317–773 are Mitochondrial intermembrane-facing; sequence RFRTTTGLDS…VLEGKKLEVR (457 aa). ATP is bound by residues Val-341, Thr-383, Gly-384, Lys-385, Thr-386, and Leu-387. Residue His-599 participates in Zn(2+) binding. Glu-600 is a catalytic residue. Residues His-603 and Asp-677 each coordinate Zn(2+).

It in the N-terminal section; belongs to the AAA ATPase family. This sequence in the C-terminal section; belongs to the peptidase M41 family. In terms of assembly, homohexamer; may also form heterohexamers. Exists in several complexes of 600-1100 kDa. Interacts with AFG1L. Requires Zn(2+) as cofactor. Proteolytically processed by mitochondrial processing peptidase (MPP) to generate the mature form. Degraded in an OMA1-dependent manner in response to oxidative stress. In terms of tissue distribution, high expression in cardiac and skeletal muscle mitochondria.

It localises to the mitochondrion inner membrane. Its subcellular location is the mitochondrion. It catalyses the reaction ATP + H2O = ADP + phosphate + H(+). In terms of biological role, ATP-dependent metalloprotease that catalyzes the degradation of folded and unfolded proteins with a suitable degron sequence in the mitochondrial intermembrane region. Plays an important role in regulating mitochondrial morphology and function by cleaving OPA1 at position S2, giving rise to a form of OPA1 that promotes maintenance of normal mitochondrial structure and mitochondrial protein metabolism. Ensures cell proliferation, maintains normal cristae morphology and complex I respiration activity, promotes antiapoptotic activity and protects mitochondria from the accumulation of oxidatively damaged membrane proteins. Required to control the accumulation of nonassembled respiratory chain subunits (NDUFB6, OX4 and ND1). Involved in the mitochondrial adaptation in response to various signals, such as stress or developmental cues, by mediating degradation of mitochondrial proteins to rewire the mitochondrial proteome. Catalyzes degradation of mitochondrial proteins, such as translocases, lipid transfer proteins and metabolic enzymes in response to nutrient starvation in order to limit mitochondrial biogenesis: mechanistically, YME1L is activated by decreased phosphatidylethanolamine levels caused by LPIN1 activity in response to mTORC1 inhibition. Acts as a regulator of adult neural stem cell self-renewal by promoting mitochondrial proteome rewiring, preserving neural stem and progenitor cells self-renewal. Required for normal, constitutive degradation of PRELID1. Catalyzes the degradation of OMA1 in response to membrane depolarization. Mediates degradation of TIMM17A downstream of the integrated stress response (ISR). Catalyzes degradation of MICU1 when MICU1 is not assembled via an interchain disulfide. The sequence is that of ATP-dependent zinc metalloprotease YME1L1 (YME1L1) from Homo sapiens (Human).